The chain runs to 824 residues: Serine/threonine-protein kinase SCH9 (824 aa).

Residues 1 to 23 (MMNFFTSKSSNQDTGFSSQHQHP) show a composition bias toward polar residues. 4 disordered regions span residues 1-37 (MMNF…STAG), 125-152 (NAGN…SSTT), 221-272 (ESLG…SQLP), and 285-327 (THRS…SHPI). The segment covering 24-37 (NGQNNGNNNSSTAG) has biased composition (low complexity). A C2 domain is found at 166 to 378 (QREAAAAAYG…LAHASQHQWH (213 aa)). The span at 226-248 (INNNNNNNNNNQHNQNQHINNNN) shows a compositional bias: low complexity. Composition is skewed to polar residues over residues 249 to 272 (ENTN…SQLP) and 286 to 302 (HRSS…SSVT). The segment covering 307–321 (RSSNSSSGSSNGPKN) has biased composition (low complexity). Residues 412–671 (FEVLRLLGKG…GRELRAHPFF (260 aa)) enclose the Protein kinase domain. ATP-binding positions include 418-426 (LGKGTFGQV) and Lys-441. The active-site Proton acceptor is Asp-538. A Phosphothreonine; by PKH1 or PKH2 modification is found at Thr-570. Residues 672-748 (ADIDWEALKQ…VDESAIDEHV (77 aa)) form the AGC-kinase C-terminal domain. Phosphoserine; by TORC1 is present on Ser-711. Thr-723 is subject to Phosphothreonine; by TORC1. Position 726 is a phosphoserine; by TORC1 (Ser-726). Thr-737 carries the phosphothreonine; by TORC1 modification. Phosphoserine; by TORC1 is present on residues Ser-758 and Ser-765.

This sequence belongs to the protein kinase superfamily. AGC Ser/Thr protein kinase family. cAMP subfamily. Post-translationally, phosphorylated by TORC1 in nutrient-replete conditions and during mechanical stress.

The catalysed reaction is L-seryl-[protein] + ATP = O-phospho-L-seryl-[protein] + ADP + H(+). It carries out the reaction L-threonyl-[protein] + ATP = O-phospho-L-threonyl-[protein] + ADP + H(+). With respect to regulation, activated by cAMP. Its function is as follows. Protein kinase that is part of growth control pathway which is at least partially redundant with the cAMP pathway. Regulates both BCY1 phosphorylation and MPK1 activity. Regulates ribosome biogenesis, translation initiation, and entry into stationary phase in a TORC1-dependent manner. The protein is Serine/threonine-protein kinase SCH9 (SCH9) of Saccharomyces cerevisiae (strain ATCC 204508 / S288c) (Baker's yeast).